Here is a 293-residue protein sequence, read N- to C-terminus: Acetylglutamate kinase (293 aa).

Residues 65–66, arginine 87, and asparagine 180 contribute to the substrate site; that span reads GG.

It belongs to the acetylglutamate kinase family. ArgB subfamily.

Its subcellular location is the cytoplasm. It catalyses the reaction N-acetyl-L-glutamate + ATP = N-acetyl-L-glutamyl 5-phosphate + ADP. It functions in the pathway amino-acid biosynthesis; L-arginine biosynthesis; N(2)-acetyl-L-ornithine from L-glutamate: step 2/4. Functionally, catalyzes the ATP-dependent phosphorylation of N-acetyl-L-glutamate. The sequence is that of Acetylglutamate kinase from Cereibacter sphaeroides (strain ATCC 17029 / ATH 2.4.9) (Rhodobacter sphaeroides).